The chain runs to 497 residues: Membrane-bound lytic murein transglycosylase F (497 aa).

Residues 1-29 (MFFRPDFRPRCAKWLIATGLFLMLGACVE) form the signal peptide. The tract at residues 30–267 (KPTTLERVKE…RLKDRYYGHV (238 aa)) is non-LT domain. The segment at 268 to 497 (DVLGYVGAYT…PASSPEKPAL (230 aa)) is LT domain. Glu-314 is an active-site residue. The segment at 464–497 (VADGNLHVPGVDKTQPPAPTAPVVPASSPEKPAL) is disordered. Residues 486–497 (VVPASSPEKPAL) show a composition bias toward low complexity.

It in the N-terminal section; belongs to the bacterial solute-binding protein 3 family. The protein in the C-terminal section; belongs to the transglycosylase Slt family.

Its subcellular location is the cell outer membrane. It carries out the reaction Exolytic cleavage of the (1-&gt;4)-beta-glycosidic linkage between N-acetylmuramic acid (MurNAc) and N-acetylglucosamine (GlcNAc) residues in peptidoglycan, from either the reducing or the non-reducing ends of the peptidoglycan chains, with concomitant formation of a 1,6-anhydrobond in the MurNAc residue.. Functionally, murein-degrading enzyme that degrades murein glycan strands and insoluble, high-molecular weight murein sacculi, with the concomitant formation of a 1,6-anhydromuramoyl product. Lytic transglycosylases (LTs) play an integral role in the metabolism of the peptidoglycan (PG) sacculus. Their lytic action creates space within the PG sacculus to allow for its expansion as well as for the insertion of various structures such as secretion systems and flagella. The polypeptide is Membrane-bound lytic murein transglycosylase F (Pseudomonas syringae pv. tomato (strain ATCC BAA-871 / DC3000)).